The following is a 372-amino-acid chain: Lysophosphatidic acid receptor 5 (372 aa).

At methionine 1–leucine 26 the chain is on the extracellular side. N-linked (GlcNAc...) asparagine glycosylation is found at asparagine 4 and asparagine 9. A helical membrane pass occupies residues valine 27 to phenylalanine 47. Topologically, residues leucine 48–serine 55 are cytoplasmic. Residues valine 56 to proline 76 form a helical membrane-spanning segment. Topologically, residues valine 77–threonine 96 are extracellular. The cysteines at positions 94 and 175 are disulfide-linked. A helical membrane pass occupies residues threonine 97 to valine 117. At aspartate 118 to arginine 136 the chain is on the cytoplasmic side. A helical membrane pass occupies residues valine 137–alanine 157. Topologically, residues arginine 158–arginine 187 are extracellular. A helical membrane pass occupies residues leucine 188–valine 208. Over tyrosine 209–asparagine 239 the chain is Cytoplasmic. Residues leucine 240–leucine 260 form a helical membrane-spanning segment. Residues arginine 261–arginine 276 are Extracellular-facing. A helical membrane pass occupies residues glycine 277–tyrosine 297. Residues tyrosine 298–leucine 372 are Cytoplasmic-facing. A disordered region spans residues glycine 312–leucine 372. 2 stretches are compositionally biased toward polar residues: residues serine 332–alanine 341 and serine 357–leucine 372.

It belongs to the G-protein coupled receptor 1 family. Not expressed in frontal cortex, basal forebrain, caudate putamen, thalamus, or hippocampus.

It is found in the cell membrane. Receptor for lysophosphatidic acid (LPA), a mediator of diverse cellular activities. This Homo sapiens (Human) protein is Lysophosphatidic acid receptor 5 (LPAR5).